A 436-amino-acid polypeptide reads, in one-letter code: Drebrin-like protein (436 aa).

Residues 2–133 (AVNLSRNGPA…EPECIMEKVA (132 aa)) form the ADF-H domain. Thr-26 bears the Phosphothreonine mark. A Phosphoserine modification is found at Ser-160. The residue at position 176 (Lys-176) is an N6-acetyllysine. The stretch at 179–233 (FWAKAEKEEENRRLEEKRRAEEERQRLEEERRERELQEAARREQRYQEQHRSAGA) forms a coiled coil. 2 stretches are compositionally biased toward basic and acidic residues: residues 185–229 (KEEE…EQHR) and 264–275 (HPREIFKQKERA). Residues 185–341 (KEEENRRLEE…AQTEEEPTYE (157 aa)) are disordered. Residues 276-286 (MSTTSVTSSQP) show a composition bias toward polar residues. A phosphoserine mark is found at Ser-277, Ser-280, Ser-283, and Ser-291. Polar residues predominate over residues 294–303 (LQKQLTQPET). At Lys-296 the chain carries N6-acetyllysine. Thr-299 carries the post-translational modification Phosphothreonine. A phosphotyrosine mark is found at Tyr-340 and Tyr-350. Positions 377–436 (GQGLCARALYDYQAADDTEISFDPENLITGIEVIDEGWWRGYGPDGHFGMFPANYVELIE) constitute an SH3 domain.

The protein belongs to the ABP1 family. As to quaternary structure, interacts with SHANK3, SYN1 and PRAM1. Interacts with SHANK2. Interacts with FGD1, DNM1 and MAP4K1. Interacts with ANKRD54. Interacts with COBL. Interacts with WASL and WIPF1. In terms of tissue distribution, detected in hippocampus neurons and in the Purkinje cell layer in cerebellum (at protein level). Predominantly expressed in brain, thymus and spleen. Also found in testis, heart and lung. Little or no expression detected in ovary or muscle.

Its subcellular location is the cytoplasm. It is found in the cytoskeleton. The protein localises to the cell projection. The protein resides in the lamellipodium. It localises to the ruffle. Its subcellular location is the cell cortex. It is found in the cytosol. The protein localises to the synapse. The protein resides in the perikaryon. It localises to the neuron projection. Its subcellular location is the cell membrane. It is found in the cytoplasmic vesicle. The protein localises to the clathrin-coated vesicle membrane. The protein resides in the golgi apparatus membrane. It localises to the podosome. Its subcellular location is the early endosome. It is found in the dendrite. The protein localises to the postsynaptic density. In terms of biological role, adapter protein that binds F-actin and DNM1, and thereby plays a role in receptor-mediated endocytosis. Plays a role in the reorganization of the actin cytoskeleton, formation of cell projections, such as neurites, in neuron morphogenesis and synapse formation via its interaction with WASL and COBL. Does not bind G-actin and promote actin polymerization by itself. Required for the formation of organized podosome rosettes. May act as a common effector of antigen receptor-signaling pathways in leukocytes. Acts as a key component of the immunological synapse that regulates T-cell activation by bridging TCRs and the actin cytoskeleton to gene activation and endocytic processes. The sequence is that of Drebrin-like protein from Mus musculus (Mouse).